A 122-amino-acid polypeptide reads, in one-letter code: Large ribosomal subunit protein uL14 (122 aa).

This sequence belongs to the universal ribosomal protein uL14 family. As to quaternary structure, part of the 50S ribosomal subunit. Forms a cluster with proteins L3 and L19. In the 70S ribosome, L14 and L19 interact and together make contacts with the 16S rRNA in bridges B5 and B8.

Functionally, binds to 23S rRNA. Forms part of two intersubunit bridges in the 70S ribosome. This chain is Large ribosomal subunit protein uL14, found in Mycoplasma capricolum subsp. capricolum (strain California kid / ATCC 27343 / NCTC 10154).